A 113-amino-acid polypeptide reads, in one-letter code: Large ribosomal subunit protein bL17 (113 aa).

This sequence belongs to the bacterial ribosomal protein bL17 family. Part of the 50S ribosomal subunit. Contacts protein L32.

The polypeptide is Large ribosomal subunit protein bL17 (Clostridium perfringens (strain ATCC 13124 / DSM 756 / JCM 1290 / NCIMB 6125 / NCTC 8237 / Type A)).